A 32-amino-acid polypeptide reads, in one-letter code: Photosystem I reaction center subunit XII (32 aa).

Residues 3–23 form a helical membrane-spanning segment; the sequence is SISDGQIVVALISAFIIVILA.

It belongs to the PsaM family.

The protein localises to the plastid. It localises to the chloroplast thylakoid membrane. The polypeptide is Photosystem I reaction center subunit XII (Anthoceros angustus (Hornwort)).